The sequence spans 1125 residues: Exportin-6 (1125 aa).

An N-acetylalanine modification is found at Ala-2. An Importin N-terminal domain is found at 31–97 (IEELLNNFAQ…RSCLPKLLLA (67 aa)). At Ser-199 the chain carries Phosphoserine. Thr-201 and Thr-204 each carry phosphothreonine. Phosphoserine occurs at positions 208 and 224.

It belongs to the exportin family. In terms of assembly, found in a complex with XPO6, Ran, ACTB and PFN1. Interacts with ACTB. Interacts with ACTB in a RanGTP-dependent manner.

It localises to the nucleus. The protein localises to the cytoplasm. In terms of biological role, mediates the nuclear export of actin and profilin-actin complexes in somatic cells. The protein is Exportin-6 (XPO6) of Homo sapiens (Human).